Consider the following 385-residue polypeptide: POU domain, class 3, transcription factor 2-B (385 aa).

Disordered stretches follow at residues 106–136, 149–209, and 351–385; these read LVHPAHGNHHGPGAWRSTGSTHLSSMASSNG, NGMI…TPTS, and EKRMTPPGGTIPGAEDVYGASRDTPPHLGVQTSVQ. Positions 122-136 are enriched in polar residues; sequence STGSTHLSSMASSNG. Residues 165 to 178 are compositionally biased toward basic and acidic residues; the sequence is LRDSHDDHHGDHGH. The span at 179-196 shows a compositional bias: low complexity; it reads QQPSQTQQQQQQHSQLQG. Residues 204-278 enclose the POU-specific domain; the sequence is EDTPTSDDLE…LLNKWLEEAD (75 aa). Residues 296 to 355 constitute a DNA-binding region (homeobox); sequence KRKKRTSIEVSVKGALESHFLKCPKPAAQEITSLADSLQLEKEVVRVWFCNRRQKEKRMT.

It belongs to the POU transcription factor family. Class-3 subfamily. As to expression, expressed in the developing brain and spinal cord. Also found in a restricted region of the auditory vesicle during development. In the adult, expression is restricted to the brain.

Its subcellular location is the nucleus. Its function is as follows. Transcription factor that may be implicated in patterning of the central nervous system during early development. The sequence is that of POU domain, class 3, transcription factor 2-B (pou3f2-b) from Xenopus laevis (African clawed frog).